Reading from the N-terminus, the 179-residue chain is Endoribonuclease YbeY (179 aa).

The Zn(2+) site is built by His-148, His-152, and His-158.

This sequence belongs to the endoribonuclease YbeY family. Zn(2+) is required as a cofactor.

The protein localises to the cytoplasm. Its function is as follows. Single strand-specific metallo-endoribonuclease involved in late-stage 70S ribosome quality control and in maturation of the 3' terminus of the 16S rRNA. The protein is Endoribonuclease YbeY of Prochlorococcus marinus (strain MIT 9312).